The following is a 121-amino-acid chain: Perlustrin-like protein (121 aa).

A signal peptide spans 1–23 (MKFGVGFLLSCLVALNTVQNMLA). The 81-residue stretch at 24–104 (LSCLPCDFDT…FDFKGTCQES (81 aa)) folds into the IGFBP N-terminal domain. 6 disulfide bridges follow: C26/C52, C29/C54, C36/C55, C45/C58, C66/C79, and C73/C101. N-linked (GlcNAc...) asparagine glycosylation is found at N68, N81, and N117.

In terms of tissue distribution, component of the acid-insoluble organic matrix of calcified layers of the shell (at protein level).

It is found in the secreted. The sequence is that of Perlustrin-like protein from Lottia gigantea (Giant owl limpet).